The sequence spans 100 residues: NAD(P)H-quinone oxidoreductase subunit 4L, chloroplastic (100 aa).

The next 3 membrane-spanning stretches (helical) occupy residues 1–21, 27–47, and 61–81; these read MIEN…YGLI, IKVL…LVAF, and FAVF…AIVF.

Belongs to the complex I subunit 4L family. NDH is composed of at least 16 different subunits, 5 of which are encoded in the nucleus.

It is found in the plastid. The protein localises to the chloroplast thylakoid membrane. It carries out the reaction a plastoquinone + NADH + (n+1) H(+)(in) = a plastoquinol + NAD(+) + n H(+)(out). The catalysed reaction is a plastoquinone + NADPH + (n+1) H(+)(in) = a plastoquinol + NADP(+) + n H(+)(out). In terms of biological role, NDH shuttles electrons from NAD(P)H:plastoquinone, via FMN and iron-sulfur (Fe-S) centers, to quinones in the photosynthetic chain and possibly in a chloroplast respiratory chain. The immediate electron acceptor for the enzyme in this species is believed to be plastoquinone. Couples the redox reaction to proton translocation, and thus conserves the redox energy in a proton gradient. In Chaetosphaeridium globosum (Charophycean green alga), this protein is NAD(P)H-quinone oxidoreductase subunit 4L, chloroplastic.